The sequence spans 133 residues: Glycine cleavage system H protein (133 aa).

A Lipoyl-binding domain is found at 24-106; sequence IATIGISAYA…YGDGWLLKVR (83 aa). N6-lipoyllysine is present on Lys65.

The protein belongs to the GcvH family. As to quaternary structure, the glycine cleavage system is composed of four proteins: P, T, L and H. It depends on (R)-lipoate as a cofactor.

Its function is as follows. The glycine cleavage system catalyzes the degradation of glycine. The H protein shuttles the methylamine group of glycine from the P protein to the T protein. This chain is Glycine cleavage system H protein, found in Crocosphaera subtropica (strain ATCC 51142 / BH68) (Cyanothece sp. (strain ATCC 51142)).